The chain runs to 267 residues: Ribosomal RNA small subunit methyltransferase A (267 aa).

The S-adenosyl-L-methionine site is built by Asn-18, Leu-20, Gly-45, Glu-66, Asp-91, and Asn-112.

This sequence belongs to the class I-like SAM-binding methyltransferase superfamily. rRNA adenine N(6)-methyltransferase family. RsmA subfamily.

The protein resides in the cytoplasm. It carries out the reaction adenosine(1518)/adenosine(1519) in 16S rRNA + 4 S-adenosyl-L-methionine = N(6)-dimethyladenosine(1518)/N(6)-dimethyladenosine(1519) in 16S rRNA + 4 S-adenosyl-L-homocysteine + 4 H(+). Functionally, specifically dimethylates two adjacent adenosines (A1518 and A1519) in the loop of a conserved hairpin near the 3'-end of 16S rRNA in the 30S particle. May play a critical role in biogenesis of 30S subunits. This chain is Ribosomal RNA small subunit methyltransferase A, found in Shewanella amazonensis (strain ATCC BAA-1098 / SB2B).